The sequence spans 66 residues: Brevinin-1CDYd (66 aa).

The first 22 residues, 1–22 (MFTLKKSLLILFFLGTINFSLC), serve as a signal peptide directing secretion. The propeptide occupies 23 to 44 (EEERNAEEERRDDPEERDVEVE). The cysteines at positions 60 and 66 are disulfide-linked.

Belongs to the frog skin active peptide (FSAP) family. Brevinin subfamily. As to expression, expressed by the skin glands.

The protein resides in the secreted. In terms of biological role, antimicrobial peptide. This Rana dybowskii (Dybovsky's frog) protein is Brevinin-1CDYd.